Consider the following 579-residue polypeptide: MTTAIRRAAGSSYFRNPWPALWAMMVGFFMIMLDSTVVAIANPTIMAQLRIGYATVVWVTSAYLLAYAVPMLVAGRLGDRFGPKNLYLIGLGVFTVASLGCGLSSGAGMLIAARVVQGVGAGLLTPQTLSTITRIFPAHRRGVALGAWGTVASVASLVGPLAGGALVDSMGWEWIFFVNVPVGVIGLILAAYLIPALPHHPHRFDWFGVGLSGAGMFLIVFGLQQGQSANWQPWIWAVIVGGIGFMSLFVYWQARNAREPLIPLEVFNDRNFSLSNLRIAIIAFAGTGMMLPVTFYAQAVCGLSPTHTAVLFAPTAIVGGVLAPFVGMIIDRSHPLCVLGFGFSVLAIAMTWLLCEMAPGTPIWRLVLPFIALGVAGAFVWSPLTVTATRNLRPHLAGASSGVFNAVRQLGAVLGSASMAAFMTSRIAAEMPGGVDALTGPAGQDATVLQLPEFVREPFAAAMSQSMLLPAFVALFGIVAALFLVDFTGAAVAKEPLPESDGDADDDDYVEYILRREPEEDCDTQPLRASRPAAAAASRSGAGGPLAVSWSTSAQGMPPGPPGRRAWQADTESTAPSAL.

The next 12 helical transmembrane spans lie at alanine 20 to isoleucine 40, alanine 54 to alanine 74, leucine 86 to glycine 106, glycine 142 to alanine 162, tryptophan 174 to isoleucine 194, phenylalanine 204 to glutamine 224, tryptophan 234 to alanine 254, isoleucine 279 to alanine 299, valine 310 to isoleucine 330, proline 335 to cysteine 355, leucine 366 to valine 386, and methionine 467 to phenylalanine 487. The disordered stretch occupies residues arginine 516–leucine 579. A compositionally biased stretch (low complexity) spans proline 526–serine 540. A compositionally biased stretch (polar residues) spans aspartate 570 to leucine 579.

Belongs to the major facilitator superfamily. EmrB family.

The protein localises to the cell membrane. This is an uncharacterized protein from Mycobacterium tuberculosis (strain ATCC 25618 / H37Rv).